We begin with the raw amino-acid sequence, 278 residues long: Hydroxyethylthiazole kinase (278 aa).

Met48 serves as a coordination point for substrate. Residues Arg124 and Thr175 each contribute to the ATP site. Residue Gly202 coordinates substrate.

Belongs to the Thz kinase family. Requires Mg(2+) as cofactor.

The catalysed reaction is 5-(2-hydroxyethyl)-4-methylthiazole + ATP = 4-methyl-5-(2-phosphooxyethyl)-thiazole + ADP + H(+). It participates in cofactor biosynthesis; thiamine diphosphate biosynthesis; 4-methyl-5-(2-phosphoethyl)-thiazole from 5-(2-hydroxyethyl)-4-methylthiazole: step 1/1. Its function is as follows. Catalyzes the phosphorylation of the hydroxyl group of 4-methyl-5-beta-hydroxyethylthiazole (THZ). This chain is Hydroxyethylthiazole kinase, found in Clostridium botulinum (strain Eklund 17B / Type B).